The chain runs to 274 residues: 16S rRNA (guanine(1405)-N(7))-methyltransferase (274 aa).

Residues Phe64, 102–104 (HMS), Arg108, Ala133, Asp156, 182–183 (DL), Leu198, and Gln207 contribute to the S-adenosyl-L-methionine site.

The protein belongs to the methyltransferase superfamily. Aminoglycoside resistance family.

The enzyme catalyses guanosine(1405) in 16S rRNA + S-adenosyl-L-methionine = N(7)-methylguanosine(1405) in 16S rRNA + S-adenosyl-L-homocysteine. Functionally, specifically methylates the N(7) position of guanine 1405 in 16S rRNA. Confers resistance to aminoglycosides. The polypeptide is 16S rRNA (guanine(1405)-N(7))-methyltransferase (grm) (Micromonospora rosea).